The chain runs to 200 residues: Somatotropin (200 aa).

The first 22 residues, 1 to 22, serve as a signal peptide directing secretion; it reads MARVLVVLSVVVASLFFSQGAT. Zn(2+) is bound at residue His-38. A disulfide bridge links Cys-71 with Cys-173. Residue Glu-182 coordinates Zn(2+). Cys-190 and Cys-198 are joined by a disulfide.

It belongs to the somatotropin/prolactin family.

Its subcellular location is the secreted. Its function is as follows. Growth hormone plays an important role in growth control and is involved in the regulation of several anabolic processes. Implicated as an osmoregulatory substance important for seawater adaptation. This chain is Somatotropin (gh), found in Pangasianodon gigas (Mekong giant catfish).